The primary structure comprises 915 residues: Metabotropic glutamate receptor 7 (915 aa).

Positions 1–34 (MVQLRKLLRVLTLMKFPCCVLEVLLCALAAAARG) are cleaved as a signal peptide. Residues 35-590 (QEMYAPHSIR…IIKLEWHSPW (556 aa)) are Extracellular-facing. C67 and C109 are disulfide-bonded. An N-linked (GlcNAc...) asparagine glycan is attached at N98. Residues S159, 180–182 (AST), Y230, and D314 each bind L-glutamate. 7 cysteine pairs are disulfide-bonded: C249-C541, C374-C390, C430-C437, C523-C542, C527-C545, C548-C560, and C563-C576. K407 is an L-glutamate binding site. N-linked (GlcNAc...) asparagine glycans are attached at residues N458 and N486. N-linked (GlcNAc...) asparagine glycosylation occurs at N572. A helical membrane pass occupies residues 591 to 615 (AVIPVFLAMLGIIATIFVMATFIRY). Residues 616–627 (NDTPIVRASGRE) are Cytoplasmic-facing. A helical membrane pass occupies residues 628 to 648 (LSYVLLTGIFLCYIITFLMIA). Over 649–654 (KPDVAV) the chain is Extracellular. A helical transmembrane segment spans residues 655-675 (CSFRRVFLGLGMCISYAALLT). The Cytoplasmic segment spans residues 676 to 702 (KTNRIYRIFEQGKKSVTAPRLISPTSQ). The chain crosses the membrane as a helical span at residues 703–723 (LAITSSLISVQLLGVFIWFGV). Residues 724 to 753 (DPPNIIIDYDEHKTMNPEQARGVLKCDITD) are Extracellular-facing. A helical transmembrane segment spans residues 754-775 (LQIICSLGYSILLMVTCTVYAI). The Cytoplasmic portion of the chain corresponds to 776–788 (KTRGVPENFNEAK). A helical membrane pass occupies residues 789-810 (PIGFTMYTTCIVWLAFIPIFFG). At 811–825 (TAQSAEKLYIQTTTL) the chain is on the extracellular side. A helical transmembrane segment spans residues 826-850 (TISMNLSASVALGMLYMPKVYIIIF). Topologically, residues 851 to 915 (HPELNVQKRK…KYVSYNNLVI (65 aa)) are cytoplasmic. Residues 874–895 (SRLSHKPSDRPNGEAKTELCEN) are disordered. Residues 879–892 (KPSDRPNGEAKTEL) show a composition bias toward basic and acidic residues. S900 is modified (phosphoserine).

It belongs to the G-protein coupled receptor 3 family. As to quaternary structure, homodimer. Interacts with PICK1. N-glycosylated. In terms of tissue distribution, expressed in many areas of the brain, especially in the cerebral cortex, hippocampus, and cerebellum. Expression of GRM7 isoforms in non-neuronal tissues appears to be restricted to isoform 3 and isoform 4.

Its subcellular location is the cell membrane. Functionally, G-protein coupled receptor activated by glutamate that regulates axon outgrowth through the MAPK-cAMP-PKA signaling pathway during neuronal development. Ligand binding causes a conformation change that triggers signaling via guanine nucleotide-binding proteins (G proteins) and modulates the activity of downstream effectors, such as adenylate cyclase that it inhibits. The chain is Metabotropic glutamate receptor 7 (GRM7) from Homo sapiens (Human).